A 432-amino-acid polypeptide reads, in one-letter code: Probable anion transporter 5 (432 aa).

A signal peptide spans 1 to 23 (MKLSNIPQRYVIVFLTFLSTCVC). A run of 11 helical transmembrane segments spans residues 50–70 (TILSTFFVGYACSQVPGGWAA), 78–98 (VLLLSFVLWSSTCFLVPLDPN), 101–121 (GLLVVARLLVGVAQGFIFPSI), 140–160 (ITTSGMYLGAALGMWLLPALV), 164–184 (GPESVFLAEALAGVIWSLLWI), 229–249 (LPVWAIVVNNFTFHYALYVLM), 273–293 (VPYLNMFVFSIVGGFIADYLI), 305–325 (KFLNTVGFLIASAALMVLPMF), 331–351 (VILCSSVALGFLALGRAGFAV), 360–380 (YAGIVMGVSNTAGTLAGIIGV), and 405–425 (VVFFIPGLLCIFSSVVFLLFS).

Belongs to the major facilitator superfamily. Sodium/anion cotransporter (TC 2.A.1.14) family. In terms of tissue distribution, ubiquitous.

The protein localises to the golgi apparatus membrane. Inorganic phosphate and probable anion transporter. This is Probable anion transporter 5 (ANTR5) from Arabidopsis thaliana (Mouse-ear cress).